The primary structure comprises 296 residues: uncharacterized protein (296 aa).

One can recognise an HTH lysR-type domain in the interval 1–60 (MDPKISYFQTFIVASKTKSFSKAAKRLGITQGTVSNHISALEKYFDAQLFLRTPEGVDLT). Residues 20 to 39 (FSKAAKRLGITQGTVSNHIS) constitute a DNA-binding region (H-T-H motif).

Belongs to the LysR transcriptional regulatory family.

This is an uncharacterized protein from Methanocaldococcus jannaschii (strain ATCC 43067 / DSM 2661 / JAL-1 / JCM 10045 / NBRC 100440) (Methanococcus jannaschii).